We begin with the raw amino-acid sequence, 430 residues long: Trigger factor (430 aa).

The 86-residue stretch at 163 to 248 (GNIAIIDFKG…VKEIKVKEIP (86 aa)) folds into the PPIase FKBP-type domain.

The protein belongs to the FKBP-type PPIase family. Tig subfamily.

It localises to the cytoplasm. The enzyme catalyses [protein]-peptidylproline (omega=180) = [protein]-peptidylproline (omega=0). Involved in protein export. Acts as a chaperone by maintaining the newly synthesized protein in an open conformation. Functions as a peptidyl-prolyl cis-trans isomerase. This is Trigger factor from Clostridium kluyveri (strain NBRC 12016).